Reading from the N-terminus, the 855-residue chain is Beclin-1-like protein B (855 aa).

Disordered stretches follow at residues 92 to 212 (FGKR…GSLS), 236 to 271 (LVAD…ESNN), 294 to 380 (ATIP…QKPR), and 407 to 475 (VDGG…QQQP). 2 stretches are compositionally biased toward low complexity: residues 99–123 (TQSN…SLSL) and 131–143 (QQQQ…QQQT). The span at 144-156 (FNDQSKLTATTPT) shows a compositional bias: polar residues. Residues 177–200 (HSNNSSNGSDHGGNVNTTGVSPSS) show a composition bias toward low complexity. A compositionally biased stretch (low complexity) spans 294–348 (ATIPTTTTTSTPTTPSTVGGTTPSPPSSSSSSSSSSSVITSPISRISPSNITSPS). Composition is skewed to polar residues over residues 368–377 (LNISQVSSPQ) and 413–445 (SGTE…TTPP). Residues 446 to 474 (LLSNSMNNSTNNLQSLQQQQQQQQQQQQQ) show a composition bias toward low complexity. A coiled-coil region spans residues 538–595 (EKGKTEEDLEELGKEMTLLCEEEEQLRLMIENTHQERKEVEQLTLQLQDRIATLKSLE). The tract at residues 826–855 (LNNNQNNNNINNNNNNNINNNNNNNVNKRN) is disordered.

The protein belongs to the beclin family.

It localises to the endosome membrane. In terms of biological role, involved in autophagy. May be required to recruit the atg8-phosphatidylinositol conjugate and the atg12-atg5 conjugate to the pre-autophagosomal structure. The polypeptide is Beclin-1-like protein B (atg6B) (Dictyostelium discoideum (Social amoeba)).